A 163-amino-acid polypeptide reads, in one-letter code: Protein FAM167B (163 aa).

Residues 73–132 (FDSMDSALEWLRRELREMQAQDRQLAGQLLRLRAQLHRLKMDQACHLHQELLDEAELELE) adopt a coiled-coil conformation.

Belongs to the FAM167 (SEC) family.

The polypeptide is Protein FAM167B (FAM167B) (Homo sapiens (Human)).